We begin with the raw amino-acid sequence, 120 residues long: Large ribosomal subunit protein uL18 (120 aa).

The protein belongs to the universal ribosomal protein uL18 family. As to quaternary structure, part of the 50S ribosomal subunit; part of the 5S rRNA/L5/L18/L25 subcomplex. Contacts the 5S and 23S rRNAs.

Functionally, this is one of the proteins that bind and probably mediate the attachment of the 5S RNA into the large ribosomal subunit, where it forms part of the central protuberance. This chain is Large ribosomal subunit protein uL18, found in Staphylococcus carnosus (strain TM300).